Consider the following 105-residue polypeptide: Malonate decarboxylase acyl carrier protein (105 aa).

Residue Ser-28 is modified to O-(phosphoribosyl dephospho-coenzyme A)serine.

It belongs to the MdcC family. Covalently binds the prosthetic group of malonate decarboxylase.

The protein localises to the cytoplasm. In terms of biological role, subunit of malonate decarboxylase, it is an acyl carrier protein to which acetyl and malonyl thioester residues are bound via a 2'-(5''-phosphoribosyl)-3'-dephospho-CoA prosthetic group and turn over during the catalytic mechanism. The polypeptide is Malonate decarboxylase acyl carrier protein (Xanthomonas euvesicatoria pv. vesicatoria (strain 85-10) (Xanthomonas campestris pv. vesicatoria)).